We begin with the raw amino-acid sequence, 173 residues long: Alpha-crystallin A chain (173 aa).

An N-acetylmethionine modification is found at M1. The required for complex formation with BFSP1 and BFSP2 stretch occupies residues M1 to E63. Q6 carries the post-translational modification Deamidated glutamine; partial. S45 bears the Phosphoserine mark. Residue Q50 is modified to Deamidated glutamine; partial. A sHSP domain is found at L52–S162. Residues K70 and K99 each carry the N6-acetyllysine modification. H100 contacts Zn(2+). Deamidated asparagine; partial is present on N101. Zn(2+) is bound by residues E102 and H107. The residue at position 122 (S122) is a Phosphoserine. N123 bears the Deamidated asparagine; partial mark. A disordered region spans residues P144–S173. Over residues G153–P167 the composition is skewed to basic and acidic residues. H154 provides a ligand contact to Zn(2+). S162 is a glycosylation site (O-linked (GlcNAc) serine).

Belongs to the small heat shock protein (HSP20) family. Heteromer composed of three CRYAA and one CRYAB subunits. Inter-subunit bridging via zinc ions enhances stability, which is crucial as there is no protein turn over in the lens. Can also form homodimers and homotetramers (dimers of dimers) which serve as the building blocks of homooligomers. Within homooligomers, the zinc-binding motif is created from residues of 3 different molecules. His-100 and Glu-102 from one molecule are ligands of the zinc ion, and His-107 and His-154 residues from additional molecules complete the site with tetrahedral coordination geometry. Part of a complex required for lens intermediate filament formation composed of BFSP1, BFSP2 and CRYAA. Post-translationally, acetylation at Lys-70 may increase chaperone activity. Undergoes age-dependent proteolytical cleavage at the C-terminus.

It localises to the cytoplasm. It is found in the nucleus. Contributes to the transparency and refractive index of the lens. Acts as a chaperone, preventing aggregation of various proteins under a wide range of stress conditions. Required for the correct formation of lens intermediate filaments as part of a complex composed of BFSP1, BFSP2 and CRYAA. The protein is Alpha-crystallin A chain (CRYAA) of Melursus ursinus (Sloth bear).